We begin with the raw amino-acid sequence, 192 residues long: Ion-translocating oxidoreductase complex subunit B (192 aa).

Residues Met1–Ser26 are hydrophobic. Positions Glu32 to Val91 constitute a 4Fe-4S domain. Cys49, Cys52, Cys57, Cys74, Cys117, Cys120, Cys123, Cys127, Cys147, Cys150, Cys153, and Cys157 together coordinate [4Fe-4S] cluster. 2 4Fe-4S ferredoxin-type domains span residues Met108–Arg137 and Ala138–Val167.

The protein belongs to the 4Fe4S bacterial-type ferredoxin family. RnfB subfamily. As to quaternary structure, the complex is composed of six subunits: RsxA, RsxB, RsxC, RsxD, RsxE and RsxG. It depends on [4Fe-4S] cluster as a cofactor.

It localises to the cell inner membrane. Part of a membrane-bound complex that couples electron transfer with translocation of ions across the membrane. Required to maintain the reduced state of SoxR. The polypeptide is Ion-translocating oxidoreductase complex subunit B (Escherichia coli O139:H28 (strain E24377A / ETEC)).